The sequence spans 206 residues: Large ribosomal subunit protein uL4 (206 aa).

Positions 48–78 (THSVKTRGHVSGGGAKPWRQKGTGRARAGSN) are disordered.

The protein belongs to the universal ribosomal protein uL4 family. As to quaternary structure, part of the 50S ribosomal subunit.

In terms of biological role, one of the primary rRNA binding proteins, this protein initially binds near the 5'-end of the 23S rRNA. It is important during the early stages of 50S assembly. It makes multiple contacts with different domains of the 23S rRNA in the assembled 50S subunit and ribosome. Functionally, forms part of the polypeptide exit tunnel. The chain is Large ribosomal subunit protein uL4 from Lawsonia intracellularis (strain PHE/MN1-00).